The primary structure comprises 227 residues: Phosphoribosylformylglycinamidine synthase subunit PurQ (227 aa).

The Glutamine amidotransferase type-1 domain occupies 2-226 (KFAVIQFPGS…VKAWKEEQVN (225 aa)). The active-site Nucleophile is the Cys-86. Catalysis depends on residues His-195 and Glu-197.

Part of the FGAM synthase complex composed of 1 PurL, 1 PurQ and 2 PurS subunits.

Its subcellular location is the cytoplasm. The catalysed reaction is N(2)-formyl-N(1)-(5-phospho-beta-D-ribosyl)glycinamide + L-glutamine + ATP + H2O = 2-formamido-N(1)-(5-O-phospho-beta-D-ribosyl)acetamidine + L-glutamate + ADP + phosphate + H(+). It carries out the reaction L-glutamine + H2O = L-glutamate + NH4(+). The protein operates within purine metabolism; IMP biosynthesis via de novo pathway; 5-amino-1-(5-phospho-D-ribosyl)imidazole from N(2)-formyl-N(1)-(5-phospho-D-ribosyl)glycinamide: step 1/2. In terms of biological role, part of the phosphoribosylformylglycinamidine synthase complex involved in the purines biosynthetic pathway. Catalyzes the ATP-dependent conversion of formylglycinamide ribonucleotide (FGAR) and glutamine to yield formylglycinamidine ribonucleotide (FGAM) and glutamate. The FGAM synthase complex is composed of three subunits. PurQ produces an ammonia molecule by converting glutamine to glutamate. PurL transfers the ammonia molecule to FGAR to form FGAM in an ATP-dependent manner. PurS interacts with PurQ and PurL and is thought to assist in the transfer of the ammonia molecule from PurQ to PurL. This is Phosphoribosylformylglycinamidine synthase subunit PurQ from Listeria monocytogenes serovar 1/2a (strain ATCC BAA-679 / EGD-e).